The chain runs to 148 residues: Large ribosomal subunit protein uL15 (148 aa).

The segment at 1 to 57 (MRLNDVKPQKGSKKRRRRVGRGISAGQGASAGLGMRGQKSRSGSGTRPGFEGGQQPL) is disordered. Residues 10–20 (KGSKKRRRRVG) are compositionally biased toward basic residues. A compositionally biased stretch (gly residues) spans 23 to 35 (ISAGQGASAGLGM).

Belongs to the universal ribosomal protein uL15 family. In terms of assembly, part of the 50S ribosomal subunit.

Functionally, binds to the 23S rRNA. The sequence is that of Large ribosomal subunit protein uL15 from Nostoc sp. (strain PCC 7120 / SAG 25.82 / UTEX 2576).